A 348-amino-acid chain; its full sequence is Chlorophyll(ide) b reductase NOL, chloroplastic (348 aa).

The transit peptide at 1 to 61 (MATWSGFNVS…TRQNLTVTPS (61 aa)) directs the protein to the chloroplast. Residue 84–108 (ITGSTKGIGYALAREFLKAGDNVVI) participates in NAD(+) binding. The active-site Proton acceptor is Y233.

It belongs to the short-chain dehydrogenases/reductases (SDR) family. As to quaternary structure, interacts with NCY1 to form a complex that acts as a chlorophyll b reductase. Interacts with HCAR, RCCR and the LHCII complex. Part of a SGR1-CCE-LHCII complex, which acts in chlorophyll breakdown.

The protein localises to the plastid. The protein resides in the chloroplast thylakoid membrane. It carries out the reaction 7(1)-hydroxychlorophyllide a + NAD(+) = chlorophyllide b + NADH + H(+). The catalysed reaction is 7(1)-hydroxychlorophyllide a + NADP(+) = chlorophyllide b + NADPH + H(+). Required for chlorophyll b degradation. Chlorophyll b, chlorophyllide b, pheophorbide b and pheophytin b can be used as substrates. Belongs to the chlorophyll catabolic enzymes (CCEs). The sequence is that of Chlorophyll(ide) b reductase NOL, chloroplastic (NOL) from Arabidopsis thaliana (Mouse-ear cress).